We begin with the raw amino-acid sequence, 172 residues long: MSVDPLSSKALKIKRELSENTPHLSDEALMGLSVRELNRHLRGLSAEEVTRLKQRRRTLKNRGYAASCRVKRVCQKEELQKQKSELEREVDKLARENAAMRLELDALRGKCEALQGFARSVAAARGPAALVAPASVITIVKSAPSPGPGPAPGPGPASGPGPAPGPAPAACS.

The segment at 51–76 (RLKQRRRTLKNRGYAASCRVKRVCQK) is basic motif. The bZIP domain maps to 51–114 (RLKQRRRTLK…DALRGKCEAL (64 aa)). The leucine-zipper stretch occupies residues 79-93 (LQKQKSELEREVDKL). Residues 140–172 (VKSAPSPGPGPAPGPGPASGPGPAPGPAPAACS) form a disordered region. The segment covering 145–172 (SPGPGPAPGPGPASGPGPAPGPAPAACS) has biased composition (pro residues).

This sequence belongs to the bZIP family. Maf subfamily. Monomer and homo- or heterodimer. Interacts with MIP. Forms high affinity heterodimers with members of the CNC-bZIP family such as NFE2L1/NRF1.

Its subcellular location is the nucleus. Functionally, since they lack a putative transactivation domain, the small Mafs behave as transcriptional repressors when they dimerize among themselves. However, they seem to serve as transcriptional activators by dimerizing with other (usually larger) basic-zipper proteins, such as NFE2L1/NRF1, and recruiting them to specific DNA-binding sites. Interacts with the upstream promoter region of the oxytocin receptor gene. May be a transcriptional enhancer in the up-regulation of the oxytocin receptor gene at parturition. In Bos taurus (Bovine), this protein is Transcription factor MafF (MAFF).